A 702-amino-acid polypeptide reads, in one-letter code: Phosphatase and actin regulator 4 (702 aa).

Disordered regions lie at residues 1–37 (MEDP…KSKF), 72–194 (RKPR…SSGG), and 222–363 (NLSV…PFPA). An RPEL 1 repeat occupies 63–88 (EVLERKISMRKPREELVKRGVLLEDP). The span at 72 to 84 (RKPREELVKRGVL) shows a compositional bias: basic and acidic residues. Positions 106 to 120 (GHTTPIGNARSSSPV) are enriched in polar residues. Residues Ser116, Ser118, Ser131, and Ser147 each carry the phosphoserine modification. The span at 147 to 156 (STGSQPNSEA) shows a compositional bias: polar residues. Residues 163-173 (VPKPPLLPPKR) are compositionally biased toward pro residues. The span at 233–250 (TLPAAPASTNTTATPSLT) shows a compositional bias: low complexity. Residues Ser270 and Ser291 each carry the phosphoserine modification. A compositionally biased stretch (polar residues) spans 301 to 318 (PSTSVPTLESAAAITTKT). Residues Ser342 and Ser344 each carry the phosphoserine modification. Positions 342-362 (SPSPPLPTHIPPEPPRTPPFP) are enriched in pro residues. Residue Thr358 is modified to Phosphothreonine. Ser427 is modified (phosphoserine). A Phosphothreonine modification is found at Thr432. Phosphoserine is present on residues Ser443, Ser453, and Ser464. Residues 469–536 (IEMLKVPDDE…EEDEDESYQS (68 aa)) are disordered. Residues 484-497 (TCPSTFSEEMTPTS) show a composition bias toward polar residues. A compositionally biased stretch (acidic residues) spans 508 to 518 (EEEEKESDSDS). A phosphoserine mark is found at Ser514, Ser516, Ser557, and Ser590. RPEL repeat units follow at residues 583–608 (NTLI…QPKN) and 621–646 (RRLT…RFNE). A disordered region spans residues 592–615 (RPTPEELEQRNILQPKNEADRQAE). Ser628 carries the phosphoserine modification.

It belongs to the phosphatase and actin regulator family. Binds PPP1CA and actin.

Its subcellular location is the cytoplasm. It localises to the cell projection. It is found in the lamellipodium. Its function is as follows. Regulator of protein phosphatase 1 (PP1) required for neural tube and optic fissure closure, and enteric neural crest cell (ENCCs) migration during development. Acts as an activator of PP1 by interacting with PPP1CA and preventing phosphorylation of PPP1CA at 'Thr-320'. During neural tube closure, localizes to the ventral neural tube and activates PP1, leading to down-regulate cell proliferation within cranial neural tissue and the neural retina. Also acts as a regulator of migration of enteric neural crest cells (ENCCs) by activating PP1, leading to dephosphorylation and subsequent activation of cofilin (COF1 or COF2) and repression of the integrin signaling through the RHO/ROCK pathway. The sequence is that of Phosphatase and actin regulator 4 (PHACTR4) from Homo sapiens (Human).